Reading from the N-terminus, the 582-residue chain is Semenogelin-2 (582 aa).

Positions 1 to 23 (MKSIILFVLSLLLILEKQAAVMG) are cleaved as a signal peptide. 5 disordered regions span residues 25–65 (KGGS…SSSI), 91–157 (HKTT…GISS), 171–192 (LSKE…GSQS), 272–366 (NLNQ…KDIQ), and 393–557 (SNQD…HNTV). Over residues 50 to 59 (GQKDKQHTES) the composition is skewed to basic and acidic residues. The segment covering 111 to 134 (QKGRDHVKPKRHFRLIVIHRKGGQ) has biased composition (basic residues). Polar residues-rich tracts occupy residues 137-157 (HGTQ…GISS) and 174-192 (EQAS…GSQS). Positions 293–310 (TEERQFNHGEKSVQKDVP) are enriched in basic and acidic residues. A compositionally biased stretch (polar residues) spans 325-335 (KSQNQVSIPSQ). Composition is skewed to basic and acidic residues over residues 336 to 345 (DQEHGHKENK), 353 to 366 (TEER…KDIQ), 396 to 405 (DQEHGHKENK), and 413 to 426 (TEER…KDIQ). Composition is skewed to polar residues over residues 427-437 (KSVSKGSISIQ) and 445-455 (KSQNQVTIPSQ). Residues 456-465 (DQEHGHKENK) show a composition bias toward basic and acidic residues. Polar residues-rich tracts occupy residues 487-498 (KDVSQSSLSFQT) and 506-529 (SQIQ…NSGK). Residues 530 to 546 (SADREQDLLSHEQESRY) are compositionally biased toward basic and acidic residues. Residues 547–557 (QQKSSGAHNTV) show a composition bias toward polar residues.

Belongs to the semenogelin family. In terms of assembly, interacts with SERPINA5.

It localises to the secreted. Participates in the formation of a gel matrix (sperm coagulum) entrapping the accessory gland secretions and ejaculated spermatozoa. The sequence is that of Semenogelin-2 (SEMG2) from Colobus guereza (Mantled guereza).